The primary structure comprises 584 residues: Endogenous retrovirus group FC1 Env polyprotein (584 aa).

The N-terminal stretch at 1-22 (MARPSPLCLLLLLTLLPPIVPS) is a signal peptide. The Extracellular segment spans residues 23–514 (NSLLTEPPFR…NYGGGWWQSP (492 aa)). Residues Asn69 and Asn247 are each glycosylated (N-linked (GlcNAc...) asparagine). Residues 251–254 (CFLC) carry the CXXC motif. 8 N-linked (GlcNAc...) asparagine glycosylation sites follow: Asn272, Asn276, Asn308, Asn313, Asn322, Asn334, Asn342, and Asn346. The tract at residues 388–413 (PLVIGVSLTSSLVASGLGTGAIVHFI) is fusion peptide. The CKS-17 motif lies at 449-465 (MQNRRALDLLTADKGGT). Cysteines 466 and 473 form a disulfide. The CX6CC signature appears at 466-474 (CMFLGEECC). The N-linked (GlcNAc...) asparagine glycan is linked to Asn478. The chain crosses the membrane as a helical span at residues 515-540 (LTTWIIPFISPILIICLLLLIAPCVL). Topologically, residues 541–584 (KFIKNRISEVSRVTVNQMLLHPYSRLPTSEDHYDVALTQQEAAR) are cytoplasmic.

The protein belongs to the gamma type-C retroviral envelope protein family. HERV class-I F(c)1 env subfamily. As to quaternary structure, the surface (SU) and transmembrane (TM) proteins form a heterodimer. SU and TM are attached by noncovalent interactions or by a labile interchain disulfide bond. Post-translationally, specific enzymatic cleavages in vivo yield the mature SU and TM proteins. The CXXC motif is highly conserved across a broad range of retroviral envelope proteins. It is thought to participate in the formation of a labile disulfide bond possibly with the CX6CC motif present in the transmembrane protein.

Its subcellular location is the virion. It is found in the cell membrane. Retroviral envelope proteins mediate receptor recognition and membrane fusion during early infection. Endogenous envelope proteins may have kept, lost or modified their original function during evolution. This endogenous envelope protein has lost its original fusogenic properties. Functionally, SU mediates receptor recognition. Its function is as follows. TM anchors the envelope heterodimer to the viral membrane through one transmembrane domain. The other hydrophobic domain, called fusion peptide, mediates fusion of the viral membrane with the target cell membrane. The protein is Endogenous retrovirus group FC1 Env polyprotein (ERVFC1) of Pan troglodytes (Chimpanzee).